Here is a 555-residue protein sequence, read N- to C-terminus: Galectin-3-binding protein (555 aa).

Residues 1 to 18 (MAPLRLFWIWLLVVGTRG) form the signal peptide. The SRCR domain occupies 24–124 (MRLADGGSAN…HDKDASVICT (101 aa)). 3 disulfides stabilise this stretch: Cys-49-Cys-113, Cys-62-Cys-123, and Cys-93-Cys-103. Asn-69 carries an N-linked (GlcNAc...) asparagine glycan. N-linked (GlcNAc...) asparagine glycosylation occurs at Asn-125. Positions 153–221 (CDLFITVKVR…LYSRRIDVSL (69 aa)) constitute a BTB domain. The region spanning 260 to 360 (PLELYAYALA…MPPQDLFSLQ (101 aa)) is the BACK domain. N-linked (GlcNAc...) asparagine glycans are attached at residues Asn-362, Asn-398, and Asn-550.

In terms of assembly, homodimers and homomultimers. The multimers form ring-like structures with a diameter of 30-40 nm. Binds LGALS1 and LGALS3. Binds ITGB1, COL4A1, COL5A1, COL6A1, FN1 and NID. Interacts with the gamma-tubulin ring complex (gamma-TuRC), composed of gamma-tubulin, TUBGCP2, TUBGCP3, TUBGCP4, TUBGCP5 and TUBGCP6. The unglycosylated form interacts with PDE4DIP; this interaction, which is PDE4DIP isoform-specific, may connect a pericentrosomal complex, made of AKAP9, CDK5RAP2, EB1/MAPRE1 and PDE4DIP, to the gamma-tubulin ring complex (gamma-TuRC) to promote microtubule assembly and acetylation.

The protein resides in the secreted. The protein localises to the extracellular space. It is found in the extracellular matrix. In terms of biological role, promotes integrin-mediated cell adhesion. May stimulate host defense against viruses and tumor cells. This is Galectin-3-binding protein (LGALS3BP) from Bos taurus (Bovine).